The sequence spans 554 residues: (+)-delta-cadinene synthase isozyme XC14 (554 aa).

The span at 1–16 shows a compositional bias: low complexity; the sequence is MASQVSQMPSSSPLSS. Positions 1–23 are disordered; it reads MASQVSQMPSSSPLSSNKDEMRP. Positions 307, 311, and 451 each coordinate Mg(2+). Positions 307–311 match the DDXXD motif motif; that stretch reads DDTYD.

Belongs to the terpene synthase family. It depends on Mg(2+) as a cofactor.

It catalyses the reaction (2E,6E)-farnesyl diphosphate = (1S,8aR)-delta-cadinene + diphosphate. The protein operates within secondary metabolite biosynthesis; terpenoid biosynthesis. In terms of biological role, responsible for the cyclization of trans,trans-farnesyl diphosphate (FPP) to (+)-delta cadinene. The polypeptide is (+)-delta-cadinene synthase isozyme XC14 (Gossypium arboreum (Tree cotton)).